Reading from the N-terminus, the 110-residue chain is DNA-directed RNA polymerase subunit omega (110 aa).

The protein belongs to the RNA polymerase subunit omega family. In terms of assembly, the RNAP catalytic core consists of 2 alpha, 1 beta, 1 beta' and 1 omega subunit. When a sigma factor is associated with the core the holoenzyme is formed, which can initiate transcription.

It catalyses the reaction RNA(n) + a ribonucleoside 5'-triphosphate = RNA(n+1) + diphosphate. Promotes RNA polymerase assembly. Latches the N- and C-terminal regions of the beta' subunit thereby facilitating its interaction with the beta and alpha subunits. The sequence is that of DNA-directed RNA polymerase subunit omega from Mycobacterium leprae (strain Br4923).